The primary structure comprises 586 residues: Cryptochrome-1 (586 aa).

The 130-residue stretch at 3-132 (VNAVHWFRKG…EVIVRISHTL (130 aa)) folds into the Photolyase/cryptochrome alpha/beta domain. Lysine 11 is covalently cross-linked (Glycyl lysine isopeptide (Lys-Gly) (interchain with G-Cter in ubiquitin)). An LIR 1 motif is present at residues 50 to 54 (NRWRF). A Phosphoserine; by AMPK modification is found at serine 71. An LIR 2 motif is present at residues 82-87 (DVFPRL). Residue lysine 107 forms a Glycyl lysine isopeptide (Lys-Gly) (interchain with G-Cter in ubiquitin) linkage. An LIR 3 motif is present at residues 151–156 (KRFQTL). Residue lysine 159 forms a Glycyl lysine isopeptide (Lys-Gly) (interchain with G-Cter in ubiquitin) linkage. Serine 247 is modified (phosphoserine; by MAPK). Serine 252 contributes to the FAD binding site. 2 consecutive short sequence motifs (LIR) follow at residues 255 to 260 (LRFGCL) and 271 to 276 (DLYKKV). A Phosphoserine; by AMPK modification is found at serine 280. The short motif at 285–290 (SLYGQL) is the LIR 6 element. Glutamine 289 provides a ligand contact to FAD. Lysine 329 participates in a covalent cross-link: Glycyl lysine isopeptide (Lys-Gly) (interchain with G-Cter in ubiquitin). The LIR 7 signature appears at 335 to 339 (TGFPW). Residue histidine 355 coordinates FAD. The segment at 371-470 (WISWEEGMKV…LIGINYPKPM (100 aa)) is required for inhibition of CLOCK-BMAL1-mediated transcription. The LIR 8 signature appears at 379 to 384 (KVFEEL). 387-389 (DAD) provides a ligand contact to FAD. Short sequence motifs (LIR) lie at residues 395–400 (GSWMWL), 411–416 (HCYCPV), and 430–435 (RRYLPV). The interaction with TIMELESS stretch occupies residues 471–493 (VNHAEASRLNIERMKQIYQQLSR). Residue lysine 485 forms a Glycyl lysine isopeptide (Lys-Gly) (interchain with G-Cter in ubiquitin) linkage. Short sequence motifs (LIR) lie at residues 486 to 491 (QIYQQL) and 492 to 497 (SRYRGL). The span at 545 to 559 (QQTHLLKQGRSSMGT) shows a compositional bias: polar residues. Residues 545–586 (QQTHLLKQGRSSMGTGLSGGKRPSQEEDTQSIGPKVQRQSTN) are disordered. Residue lysine 565 forms a Glycyl lysine isopeptide (Lys-Gly) (interchain with G-Cter in ubiquitin) linkage. Serine 568 is modified (phosphoserine).

The protein belongs to the DNA photolyase class-1 family. In terms of assembly, component of the circadian core oscillator, which includes the CRY proteins, CLOCK or NPAS2, BMAL1 or BMAL2, CSNK1D and/or CSNK1E, TIMELESS, and the PER proteins. Interacts directly with TIMELESS. Interacts directly with PER1, PER2 and PER3; interaction with PER2 inhibits its ubiquitination and vice versa. Interacts with FBXL21. Interacts with FBXL3. Interacts with CLOCK-BMAL1 independently of PER2 and DNA. Interacts with HDAC1, HDAC2 and SIN3B. Interacts with nuclear receptors AR, NR1D1, NR3C1/GR, RORA and RORC; the interaction with at least NR3C1/GR is ligand dependent. Interacts with PRKDC. Interacts with the G protein subunit alpha GNAS; the interaction may block GPCR-mediated regulation of cAMP concentrations. Interacts with PRMT5. Interacts with EZH2. Interacts with MYBBP1A, DOCK7, HNRNPU, RPL7A, RPL8 and RPS3. Interacts with PPP5C (via TPR repeats). Interacts with MAP1LC3B. Interacts with CLOCK. Interacts with BMAL1. Interacts weakly with HDAC3; this interaction is enhanced in the presence of FBXL3. Interacts with TRIM28, KCTD5 and DDB1. Interacts with FOXO1. Interacts with DTL and DDB1-CUL4A complex. Interacts with HNF4A. Interacts with PSMD2 in a KDM8-dependent manner. Interacts with KDM8 in a FBXL3-dependent manner. Interacts with PPARG in a ligand-dependent manner. Interacts with PPARD (via domain NR LBD) and NR1I2 (via domain NR LBD) in a ligand-dependent manner. Interacts with PPARA, NR1I3 and VDR. Requires FAD as cofactor. (6R)-5,10-methylene-5,6,7,8-tetrahydrofolate is required as a cofactor. Phosphorylation on Ser-247 by MAPK is important for the inhibition of CLOCK-BMAL1-mediated transcriptional activity. Phosphorylation by CSNK1E requires interaction with PER1 or PER2. Phosphorylation at Ser-71 and Ser-280 by AMPK decreases protein stability. Phosphorylation at Ser-568 exhibits a robust circadian rhythm with a peak at CT8, increases protein stability, prevents SCF(FBXL3)-mediated degradation and is antagonized by interaction with PRKDC. In terms of processing, ubiquitinated by the SCF(FBXL3) and SCF(FBXL21) complexes, regulating the balance between degradation and stabilization. The SCF(FBXL3) complex is mainly nuclear and mediates ubiquitination and subsequent degradation of CRY1. In contrast, cytoplasmic SCF(FBXL21) complex-mediated ubiquitination leads to stabilize CRY1 and counteract the activity of the SCF(FBXL3) complex. The SCF(FBXL3) and SCF(FBXL21) complexes probably mediate ubiquitination at different Lys residues. Ubiquitination at Lys-11 and Lys-107 are specifically ubiquitinated by the SCF(FBXL21) complex but not by the SCF(FBXL3) complex. Ubiquitination may be inhibited by PER2. Deubiquitinated by USP7. Post-translationally, undergoes autophagy-mediated degradation in the liver in a time-dependent manner. Autophagic degradation of CRY1 (an inhibitor of gluconeogenesis) occurs during periods of reduced feeding allowing induction of gluconeogenesis and maintenance of blood glucose levels.

Its subcellular location is the cytoplasm. It localises to the nucleus. Its function is as follows. Transcriptional repressor which forms a core component of the circadian clock. The circadian clock, an internal time-keeping system, regulates various physiological processes through the generation of approximately 24 hour circadian rhythms in gene expression, which are translated into rhythms in metabolism and behavior. It is derived from the Latin roots 'circa' (about) and 'diem' (day) and acts as an important regulator of a wide array of physiological functions including metabolism, sleep, body temperature, blood pressure, endocrine, immune, cardiovascular, and renal function. Consists of two major components: the central clock, residing in the suprachiasmatic nucleus (SCN) of the brain, and the peripheral clocks that are present in nearly every tissue and organ system. Both the central and peripheral clocks can be reset by environmental cues, also known as Zeitgebers (German for 'timegivers'). The predominant Zeitgeber for the central clock is light, which is sensed by retina and signals directly to the SCN. The central clock entrains the peripheral clocks through neuronal and hormonal signals, body temperature and feeding-related cues, aligning all clocks with the external light/dark cycle. Circadian rhythms allow an organism to achieve temporal homeostasis with its environment at the molecular level by regulating gene expression to create a peak of protein expression once every 24 hours to control when a particular physiological process is most active with respect to the solar day. Transcription and translation of core clock components (CLOCK, NPAS2, BMAL1, BMAL2, PER1, PER2, PER3, CRY1 and CRY2) plays a critical role in rhythm generation, whereas delays imposed by post-translational modifications (PTMs) are important for determining the period (tau) of the rhythms (tau refers to the period of a rhythm and is the length, in time, of one complete cycle). A diurnal rhythm is synchronized with the day/night cycle, while the ultradian and infradian rhythms have a period shorter and longer than 24 hours, respectively. Disruptions in the circadian rhythms contribute to the pathology of cardiovascular diseases, cancer, metabolic syndromes and aging. A transcription/translation feedback loop (TTFL) forms the core of the molecular circadian clock mechanism. Transcription factors, CLOCK or NPAS2 and BMAL1 or BMAL2, form the positive limb of the feedback loop, act in the form of a heterodimer and activate the transcription of core clock genes and clock-controlled genes (involved in key metabolic processes), harboring E-box elements (5'-CACGTG-3') within their promoters. The core clock genes: PER1/2/3 and CRY1/2 which are transcriptional repressors form the negative limb of the feedback loop and interact with the CLOCK|NPAS2-BMAL1|BMAL2 heterodimer inhibiting its activity and thereby negatively regulating their own expression. This heterodimer also activates nuclear receptors NR1D1/2 and RORA/B/G, which form a second feedback loop and which activate and repress BMAL1 transcription, respectively. CRY1 and CRY2 have redundant functions but also differential and selective contributions at least in defining the pace of the SCN circadian clock and its circadian transcriptional outputs. More potent transcriptional repressor in cerebellum and liver than CRY2, though more effective in lengthening the period of the SCN oscillator. On its side, CRY2 seems to play a critical role in tuning SCN circadian period by opposing the action of CRY1. With CRY2, is dispensable for circadian rhythm generation but necessary for the development of intercellular networks for rhythm synchrony. Capable of translocating circadian clock core proteins such as PER proteins to the nucleus. Interacts with CLOCK-BMAL1 independently of PER proteins and is found at CLOCK-BMAL1-bound sites, suggesting that CRY may act as a molecular gatekeeper to maintainCLOCK-BMAL1 in a poised and repressed state until the proper time for transcriptional activation. Represses the CLOCK-BMAL1 induced transcription of BHLHE40/DEC1, ATF4, MTA1, KLF10 and NAMPT. May repress circadian target genes expression in collaboration with HDAC1 and HDAC2 through histone deacetylation. Mediates the clock-control activation of ATR and modulates ATR-mediated DNA damage checkpoint. In liver, mediates circadian regulation of cAMP signaling and gluconeogenesis by binding to membrane-coupled G proteins and blocking glucagon-mediated increases in intracellular cAMP concentrations and CREB1 phosphorylation. Inhibits hepatic gluconeogenesis by decreasing nuclear FOXO1 levels that down-regulates gluconeogenic gene expression. Besides its role in the maintenance of the circadian clock, is also involved in the regulation of other processes. Represses glucocorticoid receptor NR3C1/GR-induced transcriptional activity by binding to glucocorticoid response elements (GREs). Plays a key role in glucose and lipid metabolism modulation, in part, through the transcriptional regulation of genes involved in these pathways, such as LEP or ACSL4. Represses PPARD and its target genes in the skeletal muscle and limits exercise capacity. Plays an essential role in the generation of circadian rhythms in the retina. Represses the transcriptional activity of NR1I2. This Macaca fascicularis (Crab-eating macaque) protein is Cryptochrome-1 (CRY1).